The sequence spans 290 residues: Pirin (290 aa).

The Fe cation site is built by H56, H58, H101, and E103.

It belongs to the pirin family. In terms of assembly, may interact with NF1/CTF1. Interacts with BCL3. Identified in a complex comprised of PIR, BLC3, NFKB1 and target DNA. Fe cation serves as cofactor. Highly expressed in a subset of melanomas. Detected at very low levels in most tissues (at protein level). Expressed in all tissues, with highest level of expression in heart and liver.

It is found in the nucleus. The protein resides in the cytoplasm. The catalysed reaction is quercetin + O2 = 2-(3,4-dihydroxybenzoyloxy)-4,6-dihydroxybenzoate + CO. Its pathway is flavonoid metabolism; quercetin degradation. With respect to regulation, inhibited by kojic acid, sodium diethyldithiocarbamate and 1,10-phenanthroline monohydrochloride. Its function is as follows. Transcriptional coregulator of NF-kappa-B which facilitates binding of NF-kappa-B proteins to target kappa-B genes in a redox-state-dependent manner. May be required for efficient terminal myeloid maturation of hematopoietic cells. Has quercetin 2,3-dioxygenase activity (in vitro). This Homo sapiens (Human) protein is Pirin (PIR).